A 261-amino-acid chain; its full sequence is tRNA (guanine-N(7)-)-methyltransferase (261 aa).

Residues Glu75, Glu100, Asp127, and Asp150 each coordinate S-adenosyl-L-methionine. The active site involves Asp150. Substrate is bound at residue Lys154. The tract at residues 156 to 161 (RHNKRR) is interaction with RNA. Substrate is bound by residues Asp186 and 223–226 (THFE).

Belongs to the class I-like SAM-binding methyltransferase superfamily. TrmB family.

It catalyses the reaction guanosine(46) in tRNA + S-adenosyl-L-methionine = N(7)-methylguanosine(46) in tRNA + S-adenosyl-L-homocysteine. It participates in tRNA modification; N(7)-methylguanine-tRNA biosynthesis. Its function is as follows. Catalyzes the formation of N(7)-methylguanine at position 46 (m7G46) in tRNA. The chain is tRNA (guanine-N(7)-)-methyltransferase from Xanthomonas campestris pv. campestris (strain 8004).